An 89-amino-acid chain; its full sequence is Small ribosomal subunit protein uS15 (89 aa).

Belongs to the universal ribosomal protein uS15 family. In terms of assembly, part of the 30S ribosomal subunit. Forms a bridge to the 50S subunit in the 70S ribosome, contacting the 23S rRNA.

In terms of biological role, one of the primary rRNA binding proteins, it binds directly to 16S rRNA where it helps nucleate assembly of the platform of the 30S subunit by binding and bridging several RNA helices of the 16S rRNA. Forms an intersubunit bridge (bridge B4) with the 23S rRNA of the 50S subunit in the ribosome. This is Small ribosomal subunit protein uS15 from Burkholderia mallei (strain NCTC 10247).